A 151-amino-acid polypeptide reads, in one-letter code: MGRLVFVSFSLLVVFLSLSGTAADCPSGWSSYEGHCYKPFNEPKNWDDAERFCLEQAKGGHLVSIESSEEADFVAQLVANNVRRGISYIWIGLRVQGEEKQCSTKWSDGSSVNYENWIEALSKTCLGLEQDTNHKWVNIYCGEINPFVCKA.

An N-terminal signal peptide occupies residues 1–23; sequence MGRLVFVSFSLLVVFLSLSGTAA. Intrachain disulfides connect Cys-25-Cys-36, Cys-53-Cys-149, and Cys-125-Cys-141. The C-type lectin domain maps to 32-150; sequence YEGHCYKPFN…CGEINPFVCK (119 aa).

It belongs to the snaclec family. As to quaternary structure, heterodimer; disulfide-linked. In terms of tissue distribution, expressed by the venom gland.

The protein resides in the secreted. Interferes with one step of hemostasis (modulation of platelet aggregation, or coagulation cascade, for example). This Sistrurus catenatus edwardsii (Desert massasauga) protein is Snaclec 3.